The following is a 347-amino-acid chain: Anthranilate phosphoribosyltransferase (347 aa).

Residues Gly-86, 89 to 90 (GD), Thr-94, 96 to 99 (NIST), 114 to 122 (KHGNRSVSS), and Ser-126 each bind 5-phospho-alpha-D-ribose 1-diphosphate. Gly-86 serves as a coordination point for anthranilate. Ser-98 provides a ligand contact to Mg(2+). Residue Asn-117 participates in anthranilate binding. An anthranilate-binding site is contributed by Arg-172. Residues Asp-230 and Glu-231 each contribute to the Mg(2+) site.

Belongs to the anthranilate phosphoribosyltransferase family. In terms of assembly, homodimer. Mg(2+) is required as a cofactor.

The enzyme catalyses N-(5-phospho-beta-D-ribosyl)anthranilate + diphosphate = 5-phospho-alpha-D-ribose 1-diphosphate + anthranilate. The protein operates within amino-acid biosynthesis; L-tryptophan biosynthesis; L-tryptophan from chorismate: step 2/5. In terms of biological role, catalyzes the transfer of the phosphoribosyl group of 5-phosphorylribose-1-pyrophosphate (PRPP) to anthranilate to yield N-(5'-phosphoribosyl)-anthranilate (PRA). The protein is Anthranilate phosphoribosyltransferase of Shewanella frigidimarina (strain NCIMB 400).